Here is a 750-residue protein sequence, read N- to C-terminus: Sulfhydryl oxidase 1 (750 aa).

Residues 1-32 (MRRCGRHSGPPSLLLLLLLLPPLLLSVPGAYA) form the signal peptide. Positions 33 to 159 (ARLSVLYSSS…RMRLIDALES (127 aa)) constitute a Thioredoxin domain. Active-site nucleophile residues include cysteine 73 and cysteine 76. 2 cysteine pairs are disulfide-bonded: cysteine 73–cysteine 76 and cysteine 104–cysteine 113. Asparagine 133 and asparagine 246 each carry an N-linked (GlcNAc...) asparagine glycan. Cysteine 396 and cysteine 408 form a disulfide bridge. The region spanning 399 to 506 (SEPHFRGFPC…EDPQFPKVQW (108 aa)) is the ERV/ALR sulfhydryl oxidase domain. FAD contacts are provided by residues arginine 404, tryptophan 411, histidine 415, aspartate 454, histidine 458, 481 to 488 (WTSHNRVN), lysine 503, and tryptophan 506. Cysteine 452 and cysteine 455 are joined by a disulfide. Cysteine 512 and cysteine 515 are disulfide-bonded. Disordered stretches follow at residues 545–567 (VRDP…ASPN) and 585–632 (EQAA…PEHT). Over residues 587 to 597 (AASAASPGATA) the composition is skewed to low complexity. A helical membrane pass occupies residues 710–730 (FLDISLCVGLYSVSFMGLLAM).

This sequence belongs to the quiescin-sulfhydryl oxidase (QSOX) family. As to quaternary structure, monomer. It depends on FAD as a cofactor. N-glycosylated. O-glycosylated on Thr and Ser residues. Isoform 3: Detected in seminal vesicle fluid (at protein level). Isoform 1: Detected in brain, hypophysis, heart, testis and the seminal vesicle. Isoform 3: Highly expressed in the seminal vesicles followed by testis, heart, brain, thymus, hypophysis and lung. Also expressed in prostate, kidney, spleen, liver.

Its subcellular location is the golgi apparatus membrane. The protein resides in the secreted. It carries out the reaction 2 R'C(R)SH + O2 = R'C(R)S-S(R)CR' + H2O2. Its function is as follows. Catalyzes the oxidation of sulfhydryl groups in peptide and protein thiols to disulfides with the reduction of oxygen to hydrogen peroxide. Plays a role in disulfide bond formation in a variety of extracellular proteins. In fibroblasts, required for normal incorporation of laminin into the extracellular matrix, and thereby for normal cell-cell adhesion and cell migration. The sequence is that of Sulfhydryl oxidase 1 (Qsox1) from Rattus norvegicus (Rat).